The following is a 288-amino-acid chain: CBY1-interacting BAR domain-containing protein 1 (288 aa).

A mitochondrion-targeting transit peptide spans 1 to 47 (MLRRSLENRDAQTRQLQDAVTNVEKHFGELCQIFAAYVRKTARLRDK). A BAR-like region spans residues 10-220 (DAQTRQLQDA…KIDEEEDLEV (211 aa)). A coiled-coil region spans residues 107–176 (KMKRDDLKAT…ETIDNFEKQK (70 aa)). The tract at residues 266–288 (RKDHQTEDDDEEDEDLDVTEEEN) is disordered. Acidic residues predominate over residues 271-288 (TEDDDEEDEDLDVTEEEN).

Belongs to the CIBAR family. Homodimer (via BAR-like domain). Heterodimer with FAM92B (via BAR-like domains). Interacts (via BAR-like domain) with CBY1; this interaction is required for targeting FAM92A to centriole and cilium basal body. Interacts (via BAR-like domain) with CBY3; both proteins form a ninefold symmetric structure at the flagellar base; are recruited to the annulus in a mutually dependent manner and regulate annulus positionning.

Its subcellular location is the cytoplasm. It is found in the cytoskeleton. The protein localises to the microtubule organizing center. The protein resides in the centrosome. It localises to the centriole. Its subcellular location is the cilium basal body. It is found in the cell projection. The protein localises to the cilium. The protein resides in the nucleus. It localises to the mitochondrion inner membrane. Its subcellular location is the flagellum. Its function is as follows. Plays a critical role in regulating mitochondrial ultrastructure and function by maintaining the integrity of mitochondrial morphology, particularly the organization of cristae. Preferentially binds to negatively charged phospholipids like cardiolipin and phosphatidylinositol 4,5-bisphosphate enhancing its interaction with mitochondrial membranes. Induces membrane curvature and tubulation, which are critical for maintaining mitochondrial ultrastructure and the organization of cristae. Plays a crucial role in ciliogenesis. May play a role in limb development through its role in ciliogenesis. Plays a key role in the correct positioning of the annulus, a septin-based ring structure in the sperm flagellum, serving both as a physical barrier and a membrane diffusion barrier that separates the midpiece (MP) from the principal piece (PP). This positioning is essential for proper sperm motility and function. Interacts with CBY3 to form a complex which localizes to the curved membrane region of the flagellar pocket. By doing so, may provide stability and rigidity to the periannular membrane to prevent membrane deformation. This function is crucial for halting annulus migration at the proximal end of the fibrous sheath-containing PP. The chain is CBY1-interacting BAR domain-containing protein 1 from Bos taurus (Bovine).